A 304-amino-acid chain; its full sequence is Haloalkane dehalogenase (304 aa).

The 113-residue stretch at 42–154 folds into the AB hydrolase-1 domain; the sequence is PIVFLHGNPT…DSVDLSPEFV (113 aa). Asp114 (nucleophile) is an active-site residue. Glu138 (proton donor) is an active-site residue. Residue His280 is the Proton acceptor of the active site.

The protein belongs to the haloalkane dehalogenase family. Type 2 subfamily. Monomer.

The catalysed reaction is 1-haloalkane + H2O = a halide anion + a primary alcohol + H(+). Catalyzes hydrolytic cleavage of carbon-halogen bonds in halogenated aliphatic compounds, leading to the formation of the corresponding primary alcohols, halide ions and protons. In Agrobacterium fabrum (strain C58 / ATCC 33970) (Agrobacterium tumefaciens (strain C58)), this protein is Haloalkane dehalogenase.